The sequence spans 74 residues: ATP synthase subunit 9, mitochondrial (74 aa).

2 helical membrane-spanning segments follow: residues 8-28 and 50-70; these read MGAGAATIALAGAAIGIGNVF and ILGFALTEAIALFALMMAFLI.

This sequence belongs to the ATPase C chain family. In terms of assembly, F-type ATPases have 2 components, CF(1) - the catalytic core - and CF(0) - the membrane proton channel. CF(1) has five subunits: alpha(3), beta(3), gamma(1), delta(1), epsilon(1). CF(0) has three main subunits: a, b and c.

The protein localises to the mitochondrion membrane. Its function is as follows. This protein is one of the chains of the nonenzymatic membrane component (F0) of mitochondrial ATPase. This is ATP synthase subunit 9, mitochondrial (ATP9) from Solanum tuberosum (Potato).